A 193-amino-acid chain; its full sequence is Ion-translocating oxidoreductase complex subunit A (193 aa).

Transmembrane regions (helical) follow at residues 5–25 (LLLFVGTVLVNNFVLVKFLGL), 39–59 (IGMGFATTFVMTIASISSWLM), 62–82 (FILVPLDLLYLRTLSFILVIA), 102–122 (LLGIFLPLITTNCAVLGVALL), 134–154 (AVYGFGAAVGFSLVMVLFAAI), and 171–191 (SIGLITAGLMSLAFMGFSGLV).

The protein belongs to the NqrDE/RnfAE family. The complex is composed of six subunits: RnfA, RnfB, RnfC, RnfD, RnfE and RnfG.

Its subcellular location is the cell inner membrane. In terms of biological role, part of a membrane-bound complex that couples electron transfer with translocation of ions across the membrane. This Proteus mirabilis (strain HI4320) protein is Ion-translocating oxidoreductase complex subunit A.